A 151-amino-acid chain; its full sequence is Ribosome maturation factor RimP (151 aa).

This sequence belongs to the RimP family.

It is found in the cytoplasm. Its function is as follows. Required for maturation of 30S ribosomal subunits. In Thermoanaerobacter sp. (strain X514), this protein is Ribosome maturation factor RimP.